Reading from the N-terminus, the 781-residue chain is ATP-dependent RNA helicase rok1 (781 aa).

Disordered stretches follow at residues leucine 7–leucine 108 and glutamine 134–glutamine 177. Over residues lysine 48 to glycine 57 the composition is skewed to basic residues. A compositionally biased stretch (acidic residues) spans serine 66–aspartate 75. 2 stretches are compositionally biased toward basic and acidic residues: residues threonine 84–leucine 108 and threonine 139–glutamine 173. The Q motif signature appears at glutamate 184–methionine 212. The Helicase ATP-binding domain occupies aspartate 233–arginine 487. Position 246-253 (alanine 246–threonine 253) interacts with ATP. The segment at glutamate 323 to lysine 386 is disordered. Residues glutamine 339–serine 369 are compositionally biased toward acidic residues. The span at aspartate 370–lysine 386 shows a compositional bias: basic and acidic residues. Residues aspartate 434 to aspartate 437 carry the DEAD box motif. The Helicase C-terminal domain maps to alanine 527–valine 689. The segment at arginine 718 to aspartate 781 is disordered. A compositionally biased stretch (basic and acidic residues) spans serine 736–serine 752.

The protein belongs to the DEAD box helicase family. DDX52/ROK1 subfamily. In terms of assembly, interacts with the U3 snoRNA and is associated with the 90S and 40S pre-ribosomes.

The protein localises to the nucleus. It is found in the nucleolus. The catalysed reaction is ATP + H2O = ADP + phosphate + H(+). Its function is as follows. ATP-dependent RNA helicase involved in 40S ribosomal subunit biogenesis. Required for the processing and cleavage of 35S pre-rRNA at sites A0, A1, and A2, leading to mature 18S rRNA. The sequence is that of ATP-dependent RNA helicase rok1 (drh-16) from Neurospora crassa (strain ATCC 24698 / 74-OR23-1A / CBS 708.71 / DSM 1257 / FGSC 987).